A 252-amino-acid chain; its full sequence is Centromere protein V (252 aa).

The interval 1–80 (MRRTRSAVAT…EEPPPAVTPA (80 aa)) is disordered. Serine 18 is subject to Phosphoserine. Arginine 39 is subject to Omega-N-methylarginine. The segment covering 54-64 (SAKPRPKPPPR) has biased composition (pro residues). Threonine 78 carries the phosphothreonine modification. In terms of domain architecture, CENP-V/GFA spans 125–237 (HTGGCHCGAV…TEEFNGSDWE (113 aa)). Zn(2+) is bound by residues cysteine 129, cysteine 131, cysteine 149, cysteine 151, cysteine 154, cysteine 193, and cysteine 196. Position 234 is a phosphoserine (serine 234).

This sequence belongs to the Gfa family. Requires Zn(2+) as cofactor.

Its subcellular location is the chromosome. The protein resides in the centromere. The protein localises to the kinetochore. It localises to the nucleus. It is found in the cytoplasm. Its subcellular location is the cytoskeleton. The protein resides in the spindle. In terms of biological role, required for distribution of pericentromeric heterochromatin in interphase nuclei and for centromere formation and organization, chromosome alignment and cytokinesis. The chain is Centromere protein V (Cenpv) from Mus musculus (Mouse).